Reading from the N-terminus, the 502-residue chain is Protein YdgA (502 aa).

The N-terminal stretch at 1–19 (MNKSLVAVGVIVALGVVWT) is a signal peptide.

This sequence to E.coli YihF and H.influenzae HI_1236. Homodimer.

Its subcellular location is the cell inner membrane. This Escherichia coli (strain K12) protein is Protein YdgA (ydgA).